The following is a 276-amino-acid chain: Lysosome-associated membrane glycoprotein 5 (276 aa).

Residues 1-27 (MDYRACTSALRMPVLLLLLCTFSCNLA) form the signal peptide. The Extracellular portion of the chain corresponds to 28–231 (EQEVENLSGL…PTDQRKQLEE (204 aa)). N-linked (GlcNAc...) asparagine glycans are attached at residues Asn-33, Asn-51, and Asn-100. Residues 232–252 (TLPLILGLTLGVAILIIVAVY) traverse the membrane as a helical segment. Topologically, residues 253–276 (HIHHKMTANQVQIPRDRSLYKHMG) are cytoplasmic.

This sequence belongs to the LAMP family. Post-translationally, glycosylated.

Its subcellular location is the cytoplasmic vesicle membrane. The protein resides in the cell membrane. It is found in the cell projection. It localises to the dendrite. The protein localises to the cytoplasmic vesicle. Its subcellular location is the secretory vesicle. The protein resides in the synaptic vesicle membrane. It is found in the growth cone membrane. It localises to the early endosome membrane. The protein localises to the recycling endosome. Its subcellular location is the endoplasmic reticulum-Golgi intermediate compartment membrane. The protein resides in the endosome membrane. Its function is as follows. Plays a role in short-term synaptic plasticity in a subset of GABAergic neurons in the brain. In Xenopus tropicalis (Western clawed frog), this protein is Lysosome-associated membrane glycoprotein 5 (lamp5).